The sequence spans 131 residues: Peptide methionine sulfoxide reductase MsrB (131 aa).

In terms of domain architecture, MsrB spans 8–130; it reads LEEWRAMLDP…NSVCLDLKPR (123 aa). Cys47, Cys50, Cys96, and Cys99 together coordinate Zn(2+). Cys119 (nucleophile) is an active-site residue.

This sequence belongs to the MsrB Met sulfoxide reductase family. Zn(2+) is required as a cofactor.

The enzyme catalyses L-methionyl-[protein] + [thioredoxin]-disulfide + H2O = L-methionyl-(R)-S-oxide-[protein] + [thioredoxin]-dithiol. This Pseudomonas entomophila (strain L48) protein is Peptide methionine sulfoxide reductase MsrB.